A 353-amino-acid chain; its full sequence is Tectonin-2 (353 aa).

A Ricin B-type lectin domain is found at 44-93 (WIFDNDGYIRLAANHNLVLDVNGGAAKEGNTVLSYPDKKDHAKNQLWVNK). 6 consecutive repeat copies span residues 138–173 (SAWE…HWDG), 174–210 (SKWH…DRGT), 211–247 (NKWS…NADS), 248–282 (NSWT…HYNG), 283–318 (NSWD…LKHG), and 319–353 (KDWE…KALL). The segment at 138-353 (SAWERHEGEL…SAHNIYKALL (216 aa)) is 6 X approximate tandem repeats.

Belongs to the tectonin family.

The protein localises to the cell surface. It localises to the cytoplasmic vesicle membrane. Probably involved in bacterial recognition. May be a lectin that function as part of a transmembrane signaling complex during phagocytosis. This chain is Tectonin-2 (TECB), found in Physarum polycephalum (Slime mold).